A 154-amino-acid chain; its full sequence is 6,7-dimethyl-8-ribityllumazine synthase (154 aa).

Residues Phe22, Ala56 to Glu58, and Thr80 to Ile82 each bind 5-amino-6-(D-ribitylamino)uracil. Ser85–Thr86 contacts (2S)-2-hydroxy-3-oxobutyl phosphate. The active-site Proton donor is His88. Phe113 provides a ligand contact to 5-amino-6-(D-ribitylamino)uracil. Arg127 contributes to the (2S)-2-hydroxy-3-oxobutyl phosphate binding site.

Belongs to the DMRL synthase family.

It catalyses the reaction (2S)-2-hydroxy-3-oxobutyl phosphate + 5-amino-6-(D-ribitylamino)uracil = 6,7-dimethyl-8-(1-D-ribityl)lumazine + phosphate + 2 H2O + H(+). The protein operates within cofactor biosynthesis; riboflavin biosynthesis; riboflavin from 2-hydroxy-3-oxobutyl phosphate and 5-amino-6-(D-ribitylamino)uracil: step 1/2. Functionally, catalyzes the formation of 6,7-dimethyl-8-ribityllumazine by condensation of 5-amino-6-(D-ribitylamino)uracil with 3,4-dihydroxy-2-butanone 4-phosphate. This is the penultimate step in the biosynthesis of riboflavin. The protein is 6,7-dimethyl-8-ribityllumazine synthase of Lactococcus lactis subsp. lactis (strain IL1403) (Streptococcus lactis).